We begin with the raw amino-acid sequence, 491 residues long: Inositol-pentakisphosphate 2-kinase (491 aa).

The EXKPK motif motif lies at 136–140 (EIKPK). The residue at position 282 (Ser-282) is a Phosphoserine.

This sequence belongs to the IPK1 type 2 family. As to expression, ubiquitously expressed, with high expression in heart, brain, testis and placenta.

It localises to the cytoplasm. The protein localises to the nucleus. It catalyses the reaction 1D-myo-inositol 1,3,4,5,6-pentakisphosphate + ATP = 1D-myo-inositol hexakisphosphate + ADP + H(+). In terms of biological role, phosphorylates Ins(1,3,4,5,6)P5 at position 2 to form Ins(1,2,3,4,5,6)P6 (InsP6 or phytate). InsP6 is involved in many processes such as mRNA export, non-homologous end-joining, endocytosis, ion channel regulation. It also protects cells from TNF-alpha-induced apoptosis. This Homo sapiens (Human) protein is Inositol-pentakisphosphate 2-kinase (IPPK).